Consider the following 1457-residue polypeptide: NBPF family member NBPF12 (1457 aa).

A coiled-coil region spans residues 75 to 119 (RQFKEEKLAEQLKQAEELRQYKVLVHSQERELTQLREKLREGRDA). Residues 162-200 (LSPENDEDEDEDVQVEEDEKVLESSAPREVQKAEESKVP) form a disordered region. Residues 165 to 181 (ENDEDEDEDVQVEEDEK) show a composition bias toward acidic residues. Positions 165–259 (ENDEDEDEDV…ECQDALNILP (95 aa)) constitute an Olduvai 1 domain. Basic and acidic residues predominate over residues 190–200 (EVQKAEESKVP). The stretch at 339 to 390 (KSMLRNELQFKEEKLAEQLKQAEELRQYKVLVHSQERELTQLREKLREGRDA) forms a coiled coil. The segment at 432-472 (KLSPENDEDEDEDVQVEEDEKVLESSSPREMQKAEESKVPE) is disordered. The span at 436–452 (ENDEDEDEDVQVEEDEK) shows a compositional bias: acidic residues. The region spanning 436-530 (ENDEDEDEDV…ECQDALNILP (95 aa)) is the Olduvai 2 domain. Residues 461–472 (EMQKAEESKVPE) show a composition bias toward basic and acidic residues. Residues 610–661 (KSMLRNELQFKEEKLAEQLKQAEELRQYKVLVHSQERELTQLREKLREGRDA) are a coiled coil. 9 consecutive Olduvai domains span residues 707-799 (ENDN…HIIP), 800-871 (ENES…VDIG), 872-963 (RHRW…PSCP), 966-1021 (SREL…LDVD), 1022-1114 (RIKK…RSKK), 1115-1207 (KRRR…PSCP), 1210-1265 (SREL…LDVD), 1266-1358 (RIKK…RSKK), and 1359-1457 (KRRR…IFPQ). Disordered stretches follow at residues 721–746 (AEKV…EDSL) and 791–838 (WEDA…GYST). Composition is skewed to acidic residues over residues 801–810 (NESDDEEEEE) and 821–833 (ESEE…ESWD). The segment at 1100–1139 (KKGKGKKRRGRRSKKKRRRGRKEGEEDQNPPCPRLSRELL) is disordered. The span at 1102 to 1120 (GKGKKRRGRRSKKKRRRGR) shows a compositional bias: basic residues. The disordered stretch occupies residues 1344–1378 (KKGKGKKRRGRRSKKKRRRGRKEGEEDQNPPCPRL). The span at 1346–1364 (GKGKKRRGRRSKKKRRRGR) shows a compositional bias: basic residues.

Belongs to the NBPF family. As to expression, widely expressed with highest levels in brain, ovary, mammary gland, skin and adipose tissue. Also expressed in testis. Detected in a number of tumors including osteosarcoma, mammary carcinoma and hepatocellular carcinoma.

The protein resides in the cytoplasm. This is NBPF family member NBPF12 from Homo sapiens (Human).